A 113-amino-acid polypeptide reads, in one-letter code: MTLFFFSLGTRSFIDTESICNSRNVIENIYSNNNNNNNNNNNNNNNNNNNNNNNNNNNNNNNNNNNNNNINNNNNSNNNNNNNNNNNNNNNNNNNNNNSSSFEYSPTKFNLQY.

A disordered region spans residues 31–113 (SNNNNNNNNN…YSPTKFNLQY (83 aa)). Over residues 32–98 (NNNNNNNNNN…NNNNNNNNNN (67 aa)) the composition is skewed to low complexity. Polar residues predominate over residues 99–113 (SSSFEYSPTKFNLQY).

This is an uncharacterized protein from Dictyostelium discoideum (Social amoeba).